We begin with the raw amino-acid sequence, 515 residues long: Pisatin demethylase (515 aa).

Residue cysteine 453 participates in heme binding.

It belongs to the cytochrome P450 family. Heme is required as a cofactor.

Functionally, can detoxify the phytoalexin pisatin from garden pea. Pisatin is an antimicrobial compound produced by pea in response to infection by plant pathogens. The polypeptide is Pisatin demethylase (PDAT9) (Fusarium vanettenii (Neocosmospora pisi)).